The chain runs to 492 residues: Ribose import ATP-binding protein RbsA (492 aa).

2 ABC transporter domains span residues 3–239 (IDMR…VGRK) and 238–492 (RKLE…TGGK). Position 35–42 (35–42 (GENGAGKS)) interacts with ATP.

This sequence belongs to the ABC transporter superfamily. Ribose importer (TC 3.A.1.2.1) family. In terms of assembly, the complex is composed of an ATP-binding protein (RbsA), two transmembrane proteins (RbsC) and a solute-binding protein (RbsB).

It localises to the cell membrane. It catalyses the reaction D-ribose(out) + ATP + H2O = D-ribose(in) + ADP + phosphate + H(+). In terms of biological role, part of the ABC transporter complex RbsABC involved in ribose import. Responsible for energy coupling to the transport system. In Streptococcus agalactiae serotype V (strain ATCC BAA-611 / 2603 V/R), this protein is Ribose import ATP-binding protein RbsA.